A 421-amino-acid chain; its full sequence is Histidine--tRNA ligase (421 aa).

It belongs to the class-II aminoacyl-tRNA synthetase family. Homodimer.

Its subcellular location is the cytoplasm. The catalysed reaction is tRNA(His) + L-histidine + ATP = L-histidyl-tRNA(His) + AMP + diphosphate + H(+). The protein is Histidine--tRNA ligase of Francisella tularensis subsp. holarctica (strain LVS).